The primary structure comprises 419 residues: Tyrosine--tRNA ligase (419 aa).

Residue tyrosine 34 coordinates L-tyrosine. A 'HIGH' region motif is present at residues 39–48 (PTADSLHLGN). 2 residues coordinate L-tyrosine: tyrosine 169 and glutamine 173. A 'KMSKS' region motif is present at residues 229–233 (KFGKS). Position 232 (lysine 232) interacts with ATP. The region spanning 353–419 (LTLIELLISA…GKKKNFVLTY (67 aa)) is the S4 RNA-binding domain.

It belongs to the class-I aminoacyl-tRNA synthetase family. TyrS type 1 subfamily. In terms of assembly, homodimer.

Its subcellular location is the cytoplasm. The enzyme catalyses tRNA(Tyr) + L-tyrosine + ATP = L-tyrosyl-tRNA(Tyr) + AMP + diphosphate + H(+). In terms of biological role, catalyzes the attachment of tyrosine to tRNA(Tyr) in a two-step reaction: tyrosine is first activated by ATP to form Tyr-AMP and then transferred to the acceptor end of tRNA(Tyr). The chain is Tyrosine--tRNA ligase from Lactococcus lactis subsp. cremoris (strain SK11).